The following is a 219-amino-acid chain: Ribose-5-phosphate isomerase A (219 aa).

Residues 28–31 (SGST), 81–84 (DGAD), and 94–97 (KGGG) contribute to the substrate site. E103 acts as the Proton acceptor in catalysis. K121 serves as a coordination point for substrate.

Belongs to the ribose 5-phosphate isomerase family. Homodimer.

The enzyme catalyses aldehydo-D-ribose 5-phosphate = D-ribulose 5-phosphate. Its pathway is carbohydrate degradation; pentose phosphate pathway; D-ribose 5-phosphate from D-ribulose 5-phosphate (non-oxidative stage): step 1/1. Functionally, catalyzes the reversible conversion of ribose-5-phosphate to ribulose 5-phosphate. In Actinobacillus pleuropneumoniae serotype 5b (strain L20), this protein is Ribose-5-phosphate isomerase A.